A 277-amino-acid polypeptide reads, in one-letter code: Large ribosomal subunit protein uL2 (277 aa).

A disordered region spans residues glycine 222–lysine 277.

The protein belongs to the universal ribosomal protein uL2 family. Part of the 50S ribosomal subunit. Forms a bridge to the 30S subunit in the 70S ribosome.

Functionally, one of the primary rRNA binding proteins. Required for association of the 30S and 50S subunits to form the 70S ribosome, for tRNA binding and peptide bond formation. It has been suggested to have peptidyltransferase activity; this is somewhat controversial. Makes several contacts with the 16S rRNA in the 70S ribosome. The polypeptide is Large ribosomal subunit protein uL2 (Brucella abortus (strain S19)).